A 372-amino-acid polypeptide reads, in one-letter code: Alanine dehydrogenase (372 aa).

Substrate contacts are provided by Arg15 and Lys75. The active-site Proton donor/acceptor is His96. NAD(+) contacts are provided by residues Ser134, 178-179 (IA), Asp198, Ser220, 239-240 (VL), 267-270 (IAID), Arg280, and 299-302 (VANM). The Proton donor/acceptor role is filled by Asp270.

This sequence belongs to the AlaDH/PNT family. In terms of assembly, homohexamer.

It is found in the cytoplasm. The enzyme catalyses L-alanine + NAD(+) + H2O = pyruvate + NH4(+) + NADH + H(+). Its pathway is amino-acid degradation; L-alanine degradation via dehydrogenase pathway; NH(3) and pyruvate from L-alanine: step 1/1. With respect to regulation, inhibited by p-chloromercuribenzoate and HgCl(2) and by Cu(2+) and Pb(2+) salts, unaffected by amino acids such as D-alanine and beta-alanine or by nucleotides or nucleosides. Functionally, catalyzes the reversible reductive amination of pyruvate to L-alanine. Prefers L-alanine for oxidative deamination, other substrates are poorly reactive. In the other direction 2-oxobutyrate is almost as reactive as pyruvate. Ammonia is the sole amino donor for the reductive amination of pyruvate, NADPH is inert. Reductive amination proceeds through a sequential, ordered ternary-binary mechanism, where NADH binds first followed by ammonia and pyruvate; the products are released in the order L-alanine and NAD(+). A key factor in the assimilation of L-alanine as an energy source via the tricarboxylic acid cycle during sporulation. The polypeptide is Alanine dehydrogenase (ald) (Lysinibacillus sphaericus (Bacillus sphaericus)).